The sequence spans 764 residues: Polyribonucleotide nucleotidyltransferase (764 aa).

Positions 541 and 547 each coordinate Mg(2+). A KH domain is found at proline 607 to isoleucine 666. An S1 motif domain is found at glycine 678–valine 747.

The protein belongs to the polyribonucleotide nucleotidyltransferase family. Mg(2+) is required as a cofactor.

Its subcellular location is the cytoplasm. It catalyses the reaction RNA(n+1) + phosphate = RNA(n) + a ribonucleoside 5'-diphosphate. Its function is as follows. Involved in mRNA degradation. Catalyzes the phosphorolysis of single-stranded polyribonucleotides processively in the 3'- to 5'-direction. This is Polyribonucleotide nucleotidyltransferase from Nocardia farcinica (strain IFM 10152).